Reading from the N-terminus, the 122-residue chain is Small ribosomal subunit protein uS13 (122 aa).

Residues 97 to 122 (PVRGQKTKSNARTRKGPRPSRIKKKK) form a disordered region. Over residues 101 to 122 (QKTKSNARTRKGPRPSRIKKKK) the composition is skewed to basic residues.

Belongs to the universal ribosomal protein uS13 family. In terms of assembly, part of the 30S ribosomal subunit. Forms a loose heterodimer with protein S19. Forms two bridges to the 50S subunit in the 70S ribosome.

In terms of biological role, located at the top of the head of the 30S subunit, it contacts several helices of the 16S rRNA. In the 70S ribosome it contacts the 23S rRNA (bridge B1a) and protein L5 of the 50S subunit (bridge B1b), connecting the 2 subunits; these bridges are implicated in subunit movement. Contacts the tRNAs in the A and P-sites. The protein is Small ribosomal subunit protein uS13 of Thermosipho melanesiensis (strain DSM 12029 / CIP 104789 / BI429).